Reading from the N-terminus, the 402-residue chain is Argininosuccinate synthase (402 aa).

ATP is bound by residues 10 to 18 and Ala-38; that span reads AYSGGLDTS. Tyr-90 is a binding site for L-citrulline. Gly-120 contributes to the ATP binding site. Residues Thr-122, Asn-126, and Asp-127 each contribute to the L-aspartate site. Asn-126 is a binding site for L-citrulline. L-citrulline contacts are provided by Arg-130, Ser-179, Ser-188, Glu-264, and Tyr-276.

It belongs to the argininosuccinate synthase family. Type 1 subfamily. In terms of assembly, homotetramer.

The protein localises to the cytoplasm. It catalyses the reaction L-citrulline + L-aspartate + ATP = 2-(N(omega)-L-arginino)succinate + AMP + diphosphate + H(+). Its pathway is amino-acid biosynthesis; L-arginine biosynthesis; L-arginine from L-ornithine and carbamoyl phosphate: step 2/3. The chain is Argininosuccinate synthase from Psychromonas ingrahamii (strain DSM 17664 / CCUG 51855 / 37).